A 508-amino-acid polypeptide reads, in one-letter code: Kinesin light chain 3 (508 aa).

Positions 1–20 (MSVQVAAPGSTGLGPERLNP) are disordered. A coiled-coil region spans residues 88–150 (LLALSAHVSV…EEEKSHLQFL (63 aa)). The interval 154-197 (RQYDPPEESQRPESPPRRDSLASLFPSEEEEKKGPEAAGAAAAQ) is disordered. A compositionally biased stretch (basic and acidic residues) spans 161-173 (ESQRPESPPRRDS). Phosphoserine is present on S173. TPR repeat units lie at residues 207 to 240 (LRTL…LERS), 249 to 282 (ATML…REQT), 291 to 324 (AATL…REKV), 333 to 366 (AKQL…YEAL), and 375 to 408 (AKTK…EALP). The segment at 409-441 (APLGAPQGGTAGDTQQQVLRRSSSFSKLRESIR) is disordered. Polar residues predominate over residues 420 to 434 (GDTQQQVLRRSSSFS). A Phosphoserine modification is found at S467. A disordered region spans residues 486–508 (LSTRHLSEAPRTLSISTQDLSPR). Polar residues predominate over residues 498–508 (LSISTQDLSPR). Position 502 is a phosphothreonine (T502). A Phosphoserine modification is found at S506.

The protein belongs to the kinesin light chain family. Oligomer composed of two heavy chains and two light chains. Associates with microtubulin in an ATP-dependent manner. Interacts with KIF5C. Interacts with ODF1. Interacts with LRGUK. Interacts with VDAC2. As to expression, expressed in postmeiotic male germ cells (at protein level). Expressed in the testes (at protein level). Expressed in spleen, intestine, brain and ovary.

The protein localises to the cytoplasm. It is found in the cytoskeleton. Its subcellular location is the mitochondrion. Functionally, kinesin is a microtubule-associated force-producing protein that may play a role in organelle transport. Plays a role during spermiogenesis in the development of the sperm tail midpiece and in the normal function of spermatozoa. May play a role in the formation of the mitochondrial sheath formation in the developing spermatid midpiece. The chain is Kinesin light chain 3 (Klc3) from Mus musculus (Mouse).